A 128-amino-acid polypeptide reads, in one-letter code: Probable 4-amino-4-deoxy-L-arabinose-phosphoundecaprenol flippase subunit ArnF (128 aa).

The Cytoplasmic portion of the chain corresponds to 1–2 (MC). The helical transmembrane segment at 3–23 (LIWGLFSVIIASVAQLSLGFA) threads the bilayer. Residues 24 to 35 (ASHLPPMTHLWD) are Periplasmic-facing. The chain crosses the membrane as a helical span at residues 36–56 (FIAALLAFGLDARILLLGLLG). The Cytoplasmic portion of the chain corresponds to 57 to 76 (YLLSVFCWYKTLHKLALSKA). A helical transmembrane segment spans residues 77 to 97 (YALLSMSYVLVWIASMVLPGW). The Periplasmic segment spans residues 98 to 100 (EGT). A helical membrane pass occupies residues 101 to 121 (FSLKALLGVACIMSGLMLIFL). Residues 122-128 (PTTKQRY) lie on the Cytoplasmic side of the membrane.

The protein belongs to the ArnF family. As to quaternary structure, heterodimer of ArnE and ArnF.

The protein resides in the cell inner membrane. Its pathway is bacterial outer membrane biogenesis; lipopolysaccharide biosynthesis. In terms of biological role, translocates 4-amino-4-deoxy-L-arabinose-phosphoundecaprenol (alpha-L-Ara4N-phosphoundecaprenol) from the cytoplasmic to the periplasmic side of the inner membrane. The chain is Probable 4-amino-4-deoxy-L-arabinose-phosphoundecaprenol flippase subunit ArnF from Shigella flexneri.